A 616-amino-acid polypeptide reads, in one-letter code: uncharacterized protein (616 aa).

Belongs to the UbiD family.

This is an uncharacterized protein from Helicobacter pylori (strain ATCC 700392 / 26695) (Campylobacter pylori).